Consider the following 547-residue polypeptide: Chaperonin GroEL (547 aa).

ATP is bound by residues 30–33 (TLGP), lysine 51, 87–91 (DGTTT), glycine 415, 480–482 (NAA), and aspartate 496.

It belongs to the chaperonin (HSP60) family. In terms of assembly, forms a cylinder of 14 subunits composed of two heptameric rings stacked back-to-back. Interacts with the co-chaperonin GroES.

It localises to the cytoplasm. The enzyme catalyses ATP + H2O + a folded polypeptide = ADP + phosphate + an unfolded polypeptide.. Its function is as follows. Together with its co-chaperonin GroES, plays an essential role in assisting protein folding. The GroEL-GroES system forms a nano-cage that allows encapsulation of the non-native substrate proteins and provides a physical environment optimized to promote and accelerate protein folding. The sequence is that of Chaperonin GroEL from Glaesserella parasuis serovar 5 (strain SH0165) (Haemophilus parasuis).